The primary structure comprises 71 residues: Translation initiation factor IF-1 (71 aa).

An S1-like domain is found at 1-71 (MSKDDLIQFT…LTKGRVIHRH (71 aa)).

Belongs to the IF-1 family. As to quaternary structure, component of the 30S ribosomal translation pre-initiation complex which assembles on the 30S ribosome in the order IF-2 and IF-3, IF-1 and N-formylmethionyl-tRNA(fMet); mRNA recruitment can occur at any time during PIC assembly.

The protein localises to the cytoplasm. Functionally, one of the essential components for the initiation of protein synthesis. Stabilizes the binding of IF-2 and IF-3 on the 30S subunit to which N-formylmethionyl-tRNA(fMet) subsequently binds. Helps modulate mRNA selection, yielding the 30S pre-initiation complex (PIC). Upon addition of the 50S ribosomal subunit IF-1, IF-2 and IF-3 are released leaving the mature 70S translation initiation complex. This Rickettsia canadensis (strain McKiel) protein is Translation initiation factor IF-1.